The sequence spans 396 residues: Tyrosine--tRNA ligase (396 aa).

Residues 43 to 52 (PSSPDIHLGH) carry the 'HIGH' region motif. Positions 227–231 (KMSKS) match the 'KMSKS' region motif. Lys-230 provides a ligand contact to ATP. Residues 338 to 396 (ICVIDFIIKADLAKSKSEARRLLEQGGVEINSAKISDPGTTVKCGDIIKAGKRRYSKAV) enclose the S4 RNA-binding domain.

The protein belongs to the class-I aminoacyl-tRNA synthetase family. TyrS type 2 subfamily. In terms of assembly, homodimer.

The protein localises to the cytoplasm. The catalysed reaction is tRNA(Tyr) + L-tyrosine + ATP = L-tyrosyl-tRNA(Tyr) + AMP + diphosphate + H(+). In terms of biological role, catalyzes the attachment of tyrosine to tRNA(Tyr) in a two-step reaction: tyrosine is first activated by ATP to form Tyr-AMP and then transferred to the acceptor end of tRNA(Tyr). This chain is Tyrosine--tRNA ligase, found in Dehalococcoides mccartyi (strain ATCC BAA-2266 / KCTC 15142 / 195) (Dehalococcoides ethenogenes (strain 195)).